The chain runs to 690 residues: Elongation factor G (690 aa).

The 276-residue stretch at 8–283 folds into the tr-type G domain; that stretch reads EDYRNFGIMA…AVVDYLPSPV (276 aa). Residues 17–24, 81–85, and 135–138 each bind GTP; these read AHIDAGKT, DTPGH, and NKMD.

This sequence belongs to the TRAFAC class translation factor GTPase superfamily. Classic translation factor GTPase family. EF-G/EF-2 subfamily.

It localises to the cytoplasm. In terms of biological role, catalyzes the GTP-dependent ribosomal translocation step during translation elongation. During this step, the ribosome changes from the pre-translocational (PRE) to the post-translocational (POST) state as the newly formed A-site-bound peptidyl-tRNA and P-site-bound deacylated tRNA move to the P and E sites, respectively. Catalyzes the coordinated movement of the two tRNA molecules, the mRNA and conformational changes in the ribosome. The sequence is that of Elongation factor G from Rhodopseudomonas palustris (strain BisA53).